We begin with the raw amino-acid sequence, 22 residues long: Rothein 4.1 (22 aa).

Belongs to the frog skin active peptide (FSAP) family. Rothein subfamily. Expressed by the skin dorsal glands.

Its subcellular location is the secreted. Functionally, lacks antimicrobial activity. Does not inhibit the formation of NO by neuronal nitric oxide. In Litoria rothii (Roth's tree frog), this protein is Rothein 4.1.